A 1070-amino-acid chain; its full sequence is DNA-directed RNA polymerase subunit beta (1070 aa).

Belongs to the RNA polymerase beta chain family. In terms of assembly, in plastids the minimal PEP RNA polymerase catalytic core is composed of four subunits: alpha, beta, beta', and beta''. When a (nuclear-encoded) sigma factor is associated with the core the holoenzyme is formed, which can initiate transcription.

It is found in the plastid. It localises to the chloroplast. The enzyme catalyses RNA(n) + a ribonucleoside 5'-triphosphate = RNA(n+1) + diphosphate. Its function is as follows. DNA-dependent RNA polymerase catalyzes the transcription of DNA into RNA using the four ribonucleoside triphosphates as substrates. The chain is DNA-directed RNA polymerase subunit beta from Angiopteris evecta (Mule's foot fern).